We begin with the raw amino-acid sequence, 329 residues long: GTP 3',8-cyclase (329 aa).

The 227-residue stretch at 8-234 folds into the Radical SAM core domain; the sequence is AFARKFYYLR…QQRARSDGPA (227 aa). Arg-17 contacts GTP. 2 residues coordinate [4Fe-4S] cluster: Cys-24 and Cys-28. Tyr-30 contributes to the S-adenosyl-L-methionine binding site. Residue Cys-31 participates in [4Fe-4S] cluster binding. Residue Arg-68 coordinates GTP. Gly-72 is a binding site for S-adenosyl-L-methionine. Thr-99 lines the GTP pocket. S-adenosyl-L-methionine is bound at residue Ser-123. Lys-160 provides a ligand contact to GTP. Position 194 (Met-194) interacts with S-adenosyl-L-methionine. Positions 257 and 260 each coordinate [4Fe-4S] cluster. 262-264 serves as a coordination point for GTP; sequence RLR. Position 274 (Cys-274) interacts with [4Fe-4S] cluster.

Belongs to the radical SAM superfamily. MoaA family. Monomer and homodimer. [4Fe-4S] cluster is required as a cofactor.

The enzyme catalyses GTP + AH2 + S-adenosyl-L-methionine = (8S)-3',8-cyclo-7,8-dihydroguanosine 5'-triphosphate + 5'-deoxyadenosine + L-methionine + A + H(+). The protein operates within cofactor biosynthesis; molybdopterin biosynthesis. Its function is as follows. Catalyzes the cyclization of GTP to (8S)-3',8-cyclo-7,8-dihydroguanosine 5'-triphosphate. The polypeptide is GTP 3',8-cyclase (Pectobacterium atrosepticum (strain SCRI 1043 / ATCC BAA-672) (Erwinia carotovora subsp. atroseptica)).